A 1263-amino-acid polypeptide reads, in one-letter code: Condensin complex subunit dpy-26 (1263 aa).

Residues 1-10 (MDVPSSSNVT) show a composition bias toward polar residues. The tract at residues 1–29 (MDVPSSSNVTGRRKRQVLDDDEDDGFRST) is disordered. Positions 691–725 (NEQMDETEVEERNEQDVQRELEDIALAADEVAELM) form a coiled coil. Disordered stretches follow at residues 1098–1118 (YQAA…GTAN) and 1225–1263 (FSNL…EMEE). Positions 1106–1118 (NNQPTTSTYGTAN) are enriched in polar residues. A compositionally biased stretch (basic residues) spans 1230–1241 (RRPKAVPVRKGR).

Component of the condensin I complex, which contains the mix-1/SMC2 and smc-4/SMC4 heterodimer, and three non SMC subunits that probably regulate the complex: dpy-26, capg-1 and dpy-28. Within the complex, interacts with dpy-28, mix-1, smc-4 and capg-1. Component of the dosage compensation complex, which consists of the condensin I-like components mix-1/SMC2 and dpy-27/SMC4, and the three non SMC subunits dpy-26, capg-1 and dpy-28. Within the complex, interacts with dpy-27, dpy-28, mix-1 and capg-1. The interaction with dpy-27 is required for dpy-27 protein stability. Interacts with smcl-1. Expressed in embryos and in somatic and germline tissues in L4 stage larvae (at protein level).

It localises to the nucleus. The protein localises to the chromosome. Functionally, required for both chromosome condensation and segregation and for X-chromosome dosage compensation depending on its binding partners. Member of the condensin I complex, a complex required for conversion of interphase chromatin into mitotic-like condense chromosomes and for proper chromosome segregation in mitosis and meiosis. As a member of the condensin I complex, further controls the crossover number and distribution in meiosis by restricting double strand break formation, probably by influencing higher-order chromosome structure. Plays a role in robust cytokinesis upon presence of chromatin obstructions. Also a member of the condensin I-like dosage compensation complex that associates specifically with hermaphrodite X chromosomes to reduce their gene transcription during interphase, possibly through chromatin reorganization. As a member of the dosage compensation complex, also binds to regulatory regions of the autosomal her-1 gene, required for male development, possibly contributing to its repression in hermaphrodites. The protein is Condensin complex subunit dpy-26 of Caenorhabditis elegans.